The primary structure comprises 350 residues: MSAERLVNPHSDSDDQQVEKSLRPRTLSEFIGQEKVVEQLRIAIAAARGRNESLDHTLFYGPPGLGKTSLANVVANEMGAKIKITSGPAIERAGDLAAILTNLQANDVLFIDEVHRLNRAVEEVLYPAMEDFALDLVVGKGPGARSLRLNLPRFTVIGATTRLALLTSPLRDRFVAVHRLVFYSDDAMTEIVSRSARILGVPISPEGAREIGRRARGTPRIANRILRRVRDYAQVVADGAITLQVARDALAQLEIDELGLDENDRRLLRAIIELFNGGPVGLSTLAAALAEEVDAIEDVYEPFLLQLGFLQRTPRGRIATRRAYEHLGLPYPERTLPADDESGPQQATLF.

The interval 1–183 (MSAERLVNPH…FVAVHRLVFY (183 aa)) is large ATPase domain (RuvB-L). ATP-binding positions include Leu-22, Arg-23, Gly-64, Lys-67, Thr-68, Ser-69, 130–132 (EDF), Arg-173, Tyr-183, and Arg-220. Thr-68 serves as a coordination point for Mg(2+). The small ATPAse domain (RuvB-S) stretch occupies residues 184-254 (SDDAMTEIVS…VARDALAQLE (71 aa)). The segment at 257-350 (ELGLDENDRR…ESGPQQATLF (94 aa)) is head domain (RuvB-H). 2 residues coordinate DNA: Arg-312 and Arg-317. Residues 331 to 350 (YPERTLPADDESGPQQATLF) form a disordered region.

It belongs to the RuvB family. In terms of assembly, homohexamer. Forms an RuvA(8)-RuvB(12)-Holliday junction (HJ) complex. HJ DNA is sandwiched between 2 RuvA tetramers; dsDNA enters through RuvA and exits via RuvB. An RuvB hexamer assembles on each DNA strand where it exits the tetramer. Each RuvB hexamer is contacted by two RuvA subunits (via domain III) on 2 adjacent RuvB subunits; this complex drives branch migration. In the full resolvosome a probable DNA-RuvA(4)-RuvB(12)-RuvC(2) complex forms which resolves the HJ.

Its subcellular location is the cytoplasm. The catalysed reaction is ATP + H2O = ADP + phosphate + H(+). Its function is as follows. The RuvA-RuvB-RuvC complex processes Holliday junction (HJ) DNA during genetic recombination and DNA repair, while the RuvA-RuvB complex plays an important role in the rescue of blocked DNA replication forks via replication fork reversal (RFR). RuvA specifically binds to HJ cruciform DNA, conferring on it an open structure. The RuvB hexamer acts as an ATP-dependent pump, pulling dsDNA into and through the RuvAB complex. RuvB forms 2 homohexamers on either side of HJ DNA bound by 1 or 2 RuvA tetramers; 4 subunits per hexamer contact DNA at a time. Coordinated motions by a converter formed by DNA-disengaged RuvB subunits stimulates ATP hydrolysis and nucleotide exchange. Immobilization of the converter enables RuvB to convert the ATP-contained energy into a lever motion, pulling 2 nucleotides of DNA out of the RuvA tetramer per ATP hydrolyzed, thus driving DNA branch migration. The RuvB motors rotate together with the DNA substrate, which together with the progressing nucleotide cycle form the mechanistic basis for DNA recombination by continuous HJ branch migration. Branch migration allows RuvC to scan DNA until it finds its consensus sequence, where it cleaves and resolves cruciform DNA. The chain is Holliday junction branch migration complex subunit RuvB from Chloroflexus aurantiacus (strain ATCC 29366 / DSM 635 / J-10-fl).